A 299-amino-acid polypeptide reads, in one-letter code: Regucalcin (299 aa).

Glu-18 contributes to the a divalent metal cation binding site. Arg-101, Asn-103, and Glu-121 together coordinate substrate. An N6-succinyllysine modification is found at Lys-144. The a divalent metal cation site is built by Asn-154 and Asp-204. Asp-204 serves as the catalytic Proton donor/acceptor. Lys-244 and Lys-253 each carry N6-succinyllysine.

It belongs to the SMP-30/CGR1 family. Monomer. Zn(2+) serves as cofactor. Requires Mn(2+) as cofactor. Ca(2+) is required as a cofactor. The cofactor is Mg(2+).

The protein localises to the cytoplasm. The catalysed reaction is D-glucono-1,5-lactone + H2O = D-gluconate + H(+). In terms of biological role, gluconolactonase with low activity towards other sugar lactones, including gulonolactone and galactonolactone. Can also hydrolyze diisopropyl phosphorofluoridate and phenylacetate (in vitro). Calcium-binding protein. Modulates Ca(2+) signaling, and Ca(2+)-dependent cellular processes and enzyme activities. This is Regucalcin (RGN) from Pongo abelii (Sumatran orangutan).